The sequence spans 464 residues: UDP-N-acetylmuramoylalanine--D-glutamate ligase (464 aa).

127–133 (GSNGKST) serves as a coordination point for ATP.

The protein belongs to the MurCDEF family.

The protein localises to the cytoplasm. It catalyses the reaction UDP-N-acetyl-alpha-D-muramoyl-L-alanine + D-glutamate + ATP = UDP-N-acetyl-alpha-D-muramoyl-L-alanyl-D-glutamate + ADP + phosphate + H(+). Its pathway is cell wall biogenesis; peptidoglycan biosynthesis. Functionally, cell wall formation. Catalyzes the addition of glutamate to the nucleotide precursor UDP-N-acetylmuramoyl-L-alanine (UMA). The sequence is that of UDP-N-acetylmuramoylalanine--D-glutamate ligase from Roseobacter denitrificans (strain ATCC 33942 / OCh 114) (Erythrobacter sp. (strain OCh 114)).